Reading from the N-terminus, the 201-residue chain is Holliday junction branch migration complex subunit RuvA (201 aa).

The tract at residues 1–64 is domain I; sequence MIGRLRGELV…EDAHVLYGFA (64 aa). The interval 65-143 is domain II; that stretch reads SESERALFRS…SLPAAVTLTG (79 aa). The flexible linker stretch occupies residues 144–153; that stretch reads GKPAAAAARA. Residues 153–201 are domain III; it reads APDPVSDAVSALVSLGYKPQEASRLISAVEGEAERSEDLIRLALKATLK.

The protein belongs to the RuvA family. Homotetramer. Forms an RuvA(8)-RuvB(12)-Holliday junction (HJ) complex. HJ DNA is sandwiched between 2 RuvA tetramers; dsDNA enters through RuvA and exits via RuvB. An RuvB hexamer assembles on each DNA strand where it exits the tetramer. Each RuvB hexamer is contacted by two RuvA subunits (via domain III) on 2 adjacent RuvB subunits; this complex drives branch migration. In the full resolvosome a probable DNA-RuvA(4)-RuvB(12)-RuvC(2) complex forms which resolves the HJ.

It localises to the cytoplasm. Functionally, the RuvA-RuvB-RuvC complex processes Holliday junction (HJ) DNA during genetic recombination and DNA repair, while the RuvA-RuvB complex plays an important role in the rescue of blocked DNA replication forks via replication fork reversal (RFR). RuvA specifically binds to HJ cruciform DNA, conferring on it an open structure. The RuvB hexamer acts as an ATP-dependent pump, pulling dsDNA into and through the RuvAB complex. HJ branch migration allows RuvC to scan DNA until it finds its consensus sequence, where it cleaves and resolves the cruciform DNA. The sequence is that of Holliday junction branch migration complex subunit RuvA from Thioalkalivibrio sulfidiphilus (strain HL-EbGR7).